The chain runs to 384 residues: Mitogen-activated protein kinase 8 (384 aa).

One can recognise a Protein kinase domain in the interval 26–321; sequence YQNLRPIGSG…VDEALQHPYI (296 aa). Residues 33–38 and Lys55 each bind ATP; that span reads GSGAQG. Catalysis depends on Asp151, which acts as the Proton acceptor. Thr183 bears the Phosphothreonine mark. The short motif at 183 to 185 is the TXY element; sequence TPY. Tyr185 is subject to Phosphotyrosine.

Belongs to the protein kinase superfamily. CMGC Ser/Thr protein kinase family. MAP kinase subfamily. Requires Mg(2+) as cofactor. In terms of processing, dually phosphorylated on Thr-183 and Tyr-185, which activates the enzyme.

The protein resides in the cytoplasm. Its subcellular location is the nucleus. It localises to the synapse. The enzyme catalyses L-seryl-[protein] + ATP = O-phospho-L-seryl-[protein] + ADP + H(+). It catalyses the reaction L-threonyl-[protein] + ATP = O-phospho-L-threonyl-[protein] + ADP + H(+). Its activity is regulated as follows. Activated by threonine and tyrosine phosphorylation. Functionally, responds to activation by environmental stress and pro-inflammatory cytokines by phosphorylating a number of transcription factors, primarily components of AP-1 such as c-Jun and ATF2 and thus regulates AP-1 transcriptional activity. May play a role in the regulation of the circadian clock. The chain is Mitogen-activated protein kinase 8 (mapk8) from Danio rerio (Zebrafish).